A 295-amino-acid chain; its full sequence is N-acetylmuramic acid 6-phosphate etherase (295 aa).

The 164-residue stretch at 53–216 (TTEQFKQGGR…STITMVGVGK (164 aa)) folds into the SIS domain. Glu-81 serves as the catalytic Proton donor. Residue Glu-112 is part of the active site.

This sequence belongs to the GCKR-like family. MurNAc-6-P etherase subfamily. As to quaternary structure, homodimer.

The enzyme catalyses N-acetyl-D-muramate 6-phosphate + H2O = N-acetyl-D-glucosamine 6-phosphate + (R)-lactate. Its pathway is amino-sugar metabolism; N-acetylmuramate degradation. Functionally, specifically catalyzes the cleavage of the D-lactyl ether substituent of MurNAc 6-phosphate, producing GlcNAc 6-phosphate and D-lactate. This is N-acetylmuramic acid 6-phosphate etherase from Staphylococcus saprophyticus subsp. saprophyticus (strain ATCC 15305 / DSM 20229 / NCIMB 8711 / NCTC 7292 / S-41).